The chain runs to 247 residues: 2,3-bisphosphoglycerate-dependent phosphoglycerate mutase (247 aa).

Residues 8–15 (RHGESQWN), 21–22 (TG), Arg-60, 87–90 (ERHY), Lys-98, 114–115 (RR), and 183–184 (GN) contribute to the substrate site. The Tele-phosphohistidine intermediate role is filled by His-9. Catalysis depends on Glu-87, which acts as the Proton donor/acceptor.

The protein belongs to the phosphoglycerate mutase family. BPG-dependent PGAM subfamily.

The enzyme catalyses (2R)-2-phosphoglycerate = (2R)-3-phosphoglycerate. The protein operates within carbohydrate degradation; glycolysis; pyruvate from D-glyceraldehyde 3-phosphate: step 3/5. Catalyzes the interconversion of 2-phosphoglycerate and 3-phosphoglycerate. This chain is 2,3-bisphosphoglycerate-dependent phosphoglycerate mutase, found in Chlorobium limicola (strain DSM 245 / NBRC 103803 / 6330).